The following is a 363-amino-acid chain: Dihydroorotate dehydrogenase (quinone) (363 aa).

FMN is bound by residues 67-71 and Thr91; that span reads AGLDK. Lys71 contacts substrate. 116–120 is a substrate binding site; it reads NRMGF. Asn145 and Asn178 together coordinate FMN. A substrate-binding site is contributed by Asn178. Ser181 acts as the Nucleophile in catalysis. Asn183 contacts substrate. Residues Lys219 and Thr247 each coordinate FMN. Substrate is bound at residue 248 to 249; sequence NT. FMN contacts are provided by residues Gly268, Gly297, and 318–319; that span reads YT.

The protein belongs to the dihydroorotate dehydrogenase family. Type 2 subfamily. In terms of assembly, monomer. It depends on FMN as a cofactor.

It localises to the cell membrane. It catalyses the reaction (S)-dihydroorotate + a quinone = orotate + a quinol. The protein operates within pyrimidine metabolism; UMP biosynthesis via de novo pathway; orotate from (S)-dihydroorotate (quinone route): step 1/1. Catalyzes the conversion of dihydroorotate to orotate with quinone as electron acceptor. The sequence is that of Dihydroorotate dehydrogenase (quinone) from Myxococcus xanthus (strain DK1622).